A 782-amino-acid chain; its full sequence is Protein phosphatase 1 regulatory subunit 12C (782 aa).

Composition is skewed to low complexity over residues M1–A19 and D77–P88. 2 disordered regions span residues M1–R45 and D77–L98. S2 is modified (N-acetylserine). ANK repeat units lie at residues D104–Q133, E137–A166, T230–L259, and D263–S292. Residues C301–R332 are a coiled coil. The disordered stretch occupies residues D321–K685. The segment covering R332–S341 has biased composition (polar residues). Residues S353 to P369 are compositionally biased toward basic and acidic residues. The segment covering V401–V413 has biased composition (low complexity). Residues S403, S411, S431, S454, and S509 each carry the phosphoserine modification. Positions R451–A465 are enriched in polar residues. The segment covering V537–R546 has biased composition (basic and acidic residues). Residues K547–R557 are compositionally biased toward basic residues. Residue T560 is modified to Phosphothreonine. S647 carries the phosphoserine modification. Positions S664–K685 are enriched in basic and acidic residues. The stretch at G681–K782 forms a coiled coil.

As to quaternary structure, PP1 comprises a catalytic subunit, PPP1CA, PPP1CB or PPP1CC, and one or several targeting or regulatory subunits. PPP1R12C mediates binding to myosin. Interacts via its N-terminus with PPP1CB. Interacts with IL16. Interacts with the coiled-coil domain of MPRIP. Interacts with NOD2. Post-translationally, phosphorylation at Thr-560 is essential for its interaction with PPP1CB.

The protein resides in the cytoplasm. It localises to the cytoskeleton. Its subcellular location is the stress fiber. Its function is as follows. Regulates myosin phosphatase activity. The protein is Protein phosphatase 1 regulatory subunit 12C of Mus musculus (Mouse).